Consider the following 233-residue polypeptide: 7-cyano-7-deazaguanine synthase (233 aa).

7-17 (LSGGLDSAVTS) is an ATP binding site. Residues Cys195, Cys206, Cys209, and Cys212 each contribute to the Zn(2+) site.

It belongs to the QueC family. The cofactor is Zn(2+).

The enzyme catalyses 7-carboxy-7-deazaguanine + NH4(+) + ATP = 7-cyano-7-deazaguanine + ADP + phosphate + H2O + H(+). It participates in purine metabolism; 7-cyano-7-deazaguanine biosynthesis. In terms of biological role, catalyzes the ATP-dependent conversion of 7-carboxy-7-deazaguanine (CDG) to 7-cyano-7-deazaguanine (preQ(0)). The chain is 7-cyano-7-deazaguanine synthase from Methanococcus maripaludis (strain C6 / ATCC BAA-1332).